Consider the following 399-residue polypeptide: Probable endo-xylogalacturonan hydrolase A (399 aa).

An N-terminal signal peptide occupies residues 1–19 (MTFGKAAFLSFSLFGASWA). PbH1 repeat units lie at residues 177 to 207 (TTNAVFSDMRLDATSKSENLPKNTDGFDIGE), 208 to 229 (STYVTISGTTVSNNDDCVAFKP), 231 to 251 (CNYLTVTDITCTGSHGLSVGS), 260 to 283 (VQNVRVEGATMISSTKAAGIKTYP), and 293 to 314 (VTNVTWKDITIQNCDYAIQIQS). Asp-222 (proton donor) is an active-site residue. The active site involves His-245. N-linked (GlcNAc...) asparagine glycosylation is found at Asn-295 and Asn-382.

Belongs to the glycosyl hydrolase 28 family.

It is found in the secreted. Its function is as follows. Pectinolytic enzyme involved in the degradation of xylogalacturonan (xga), a galacturonan backbone heavily substituted with xylose, and which is one important component of the hairy regions of pectin. Activity requires a galacturonic acid backbone substituted with xylose. The chain is Probable endo-xylogalacturonan hydrolase A (xghA) from Emericella nidulans (strain FGSC A4 / ATCC 38163 / CBS 112.46 / NRRL 194 / M139) (Aspergillus nidulans).